A 204-amino-acid polypeptide reads, in one-letter code: Ras-related protein R-Ras2 (204 aa).

At Ala-2 the chain carries N-acetylalanine. 21–29 (GGGGVGKSA) is a binding site for GTP. The short motif at 43-51 (YDPTIEDSY) is the Effector region element. GTP-binding positions include 68 to 72 (DTAGQ), 127 to 130 (NKAD), and 157 to 159 (SAK). Position 186 is a phosphoserine (Ser-186). 4 N6-palmitoyl lysine lipidation sites follow: Lys-192, Lys-194, Lys-196, and Lys-197. Cys-199 is lipidated: S-palmitoyl cysteine. Cys-201 carries the post-translational modification Cysteine methyl ester. A lipid anchor (S-farnesyl cysteine) is attached at Cys-201. Positions 202–204 (VIF) are cleaved as a propeptide — removed in mature form.

It belongs to the small GTPase superfamily. Ras family. As to quaternary structure, interacts with RASSF5. Post-translationally, may be post-translationally modified by both palmitoylation and polyisoprenylation. Fatty-acylation at Lys-192, Lys-194; lys-196 and Lys-197 is required for localization to the plasma membrane and activity. Defatty-acylated by SIRT6, affecting its localization to the plasma membrane. As to expression, ubiquitously present in all tissues examined, with the highest levels in heart, placenta, and skeletal muscle. Moderate levels in lung and liver; low levels in brain, kidney, and pancreas.

The protein resides in the cell membrane. Its subcellular location is the golgi apparatus membrane. It catalyses the reaction GTP + H2O = GDP + phosphate + H(+). Its function is as follows. GTP-binding protein with GTPase activity, involved in the regulation of MAPK signaling pathway and thereby controlling multiple cellular processes. Regulates craniofacial development. This chain is Ras-related protein R-Ras2, found in Homo sapiens (Human).